We begin with the raw amino-acid sequence, 394 residues long: Chalcone synthase 4 (394 aa).

Cysteine 165 is an active-site residue.

This sequence belongs to the thiolase-like superfamily. Chalcone/stilbene synthases family.

It catalyses the reaction (E)-4-coumaroyl-CoA + 3 malonyl-CoA + 3 H(+) = 2',4,4',6'-tetrahydroxychalcone + 3 CO2 + 4 CoA. Its pathway is secondary metabolite biosynthesis; flavonoid biosynthesis. Its function is as follows. The primary product of this enzyme is 4,2',4',6'-tetrahydroxychalcone (also termed naringenin-chalcone or chalcone) which can under specific conditions spontaneously isomerize into naringenin. The protein is Chalcone synthase 4 (CHS4) of Bromheadia finlaysoniana (Orchid).